The following is a 197-amino-acid chain: Protocatechuate 3,4-dioxygenase alpha chain (197 aa).

Arg-130 is a binding site for 3,4-dihydroxybenzoate.

Belongs to the intradiol ring-cleavage dioxygenase family. In terms of assembly, the enzyme is an oligomer of 12 copies of the alpha and beta chains. Requires Fe(3+) as cofactor.

The enzyme catalyses 3,4-dihydroxybenzoate + O2 = 3-carboxy-cis,cis-muconate + 2 H(+). Its pathway is aromatic compound metabolism; beta-ketoadipate pathway; 3-carboxy-cis,cis-muconate from 3,4-dihydroxybenzoate: step 1/1. Functionally, plays an essential role in the utilization of numerous aromatic and hydroaromatic compounds via the beta-ketoadipate pathway. The chain is Protocatechuate 3,4-dioxygenase alpha chain (pcaG) from Burkholderia cepacia (Pseudomonas cepacia).